The following is a 210-amino-acid chain: High mobility group protein B2 (210 aa).

At lysine 3 the chain carries N6-acetyllysine. The segment at residues 9 to 79 (PRGKMSSYAF…RYDREMKNYV (71 aa)) is a DNA-binding region (HMG box 1). At cysteine 23 the chain carries Cysteine sulfonic acid (-SO3H); alternate. Cysteine 23 and cysteine 45 are oxidised to a cystine. Lysine 30 is subject to N6-acetyllysine. Position 35 is a phosphoserine (serine 35). Lysine 43 bears the N6-acetyllysine mark. Cysteine 45 is subject to Cysteine sulfonic acid (-SO3H); alternate. Positions 51-76 (TMSAKEKSKFEDLAKSDKARYDREMK) are enriched in basic and acidic residues. Residues 51–102 (TMSAKEKSKFEDLAKSDKARYDREMKNYVPPKGDKKGKKKDPNAPKRPPSAF) are disordered. N6-acetyllysine is present on lysine 90. Positions 95 to 163 (PKRPPSAFFL…KYEKDIAAYR (69 aa)) form a DNA-binding region, HMG box 2. Residue serine 100 is modified to Phosphoserine. Cysteine sulfonic acid (-SO3H) is present on cysteine 106. Residues lysine 114 and lysine 141 each carry the N6-acetyllysine modification. Residues 162 to 172 (YRAKGKSEVGK) show a composition bias toward basic and acidic residues. The tract at residues 162–210 (YRAKGKSEVGKKGPGRPTGSKKKNEPEDEEEEEEEEDDEDEEEEDEDEE) is disordered. The tract at residues 165–180 (KGKSEVGKKGPGRPTG) is required for chemotactic activity. Positions 187 to 210 (PEDEEEEEEEEDDEDEEEEDEDEE) are enriched in acidic residues.

The protein belongs to the HMGB family. In terms of assembly, interacts with POU2F2, POU2F1 and POU3F1. Component of the RAG complex composed of core components RAG1 and RAG2, and associated component HMGB1 or HMGB2. Component of the SET complex, composed of at least ANP32A, APEX1, HMGB2, NME1, SET and TREX1. Directly interacts with SET. Interacts with LEF1. Reduction/oxidation of cysteine residues Cys-23, Cys-45 and Cys-106 and a possible intramolecular disulfide bond involving Cys-23 and Cys-45 give rise to different redox forms with specific functional activities in various cellular compartments: 1- fully reduced HMGB2 (HMGB2C23hC45hC106h), 2- disulfide HMGB2 (HMGB2C23-C45C106h) and 3- sulfonyl HMGB2 (HMGB2C23soC45soC106so).

Its subcellular location is the nucleus. It is found in the chromosome. It localises to the cytoplasm. The protein resides in the secreted. Its function is as follows. Multifunctional protein with various roles in different cellular compartments. May act in a redox sensitive manner. In the nucleus is an abundant chromatin-associated non-histone protein involved in transcription, chromatin remodeling and V(D)J recombination and probably other processes. Binds DNA with a preference to non-canonical DNA structures such as single-stranded DNA. Can bent DNA and enhance DNA flexibility by looping thus providing a mechanism to promote activities on various gene promoters by enhancing transcription factor binding and/or bringing distant regulatory sequences into close proximity. Involved in V(D)J recombination by acting as a cofactor of the RAG complex: acts by stimulating cleavage and RAG protein binding at the 23 bp spacer of conserved recombination signal sequences (RSS). Proposed to be involved in the innate immune response to nucleic acids by acting as a cytoplasmic promiscuous immunogenic DNA/RNA sensor which cooperates with subsequent discriminative sensing by specific pattern recognition receptors. In the extracellular compartment acts as a chemokine. Promotes proliferation and migration of endothelial cells implicating AGER/RAGE. Has antimicrobial activity in gastrointestinal epithelial tissues. Involved in inflammatory response to antigenic stimulus coupled with pro-inflammatory activity. May play a role in germ cell differentiation. Involved in modulation of neurogenesis probably by regulation of neural stem proliferation. Involved in articular cartilage surface maintenance implicating LEF1 and the Wnt/beta-catenin pathway. This Rattus norvegicus (Rat) protein is High mobility group protein B2 (Hmgb2).